The primary structure comprises 381 residues: Cytochrome b (381 aa).

Helical transmembrane passes span 34 to 54 (FGSL…FLAM), 78 to 99 (WLIR…YFHI), 114 to 134 (WNIG…GYVL), and 179 to 199 (FFAF…IHIL). Residues histidine 84 and histidine 98 each coordinate heme b. 2 residues coordinate heme b: histidine 183 and histidine 197. Residue histidine 202 participates in a ubiquinone binding. Transmembrane regions (helical) follow at residues 227–247 (YKDA…ALFL), 289–309 (LGGV…PFLH), 321–341 (LTQV…WIGG), and 348–368 (FILI…IAIP).

Belongs to the cytochrome b family. The cytochrome bc1 complex contains 3 respiratory subunits (MT-CYB, CYC1 and UQCRFS1), 2 core proteins (UQCRC1 and UQCRC2) and probably 6 low-molecular weight proteins. The cofactor is heme b.

The protein resides in the mitochondrion inner membrane. Functionally, component of the ubiquinol-cytochrome c reductase complex (complex III or cytochrome b-c1 complex) that is part of the mitochondrial respiratory chain. The b-c1 complex mediates electron transfer from ubiquinol to cytochrome c. Contributes to the generation of a proton gradient across the mitochondrial membrane that is then used for ATP synthesis. The polypeptide is Cytochrome b (mt-cyb) (Carcharodon carcharias (Great white shark)).